We begin with the raw amino-acid sequence, 310 residues long: tRNA dimethylallyltransferase (310 aa).

An ATP-binding site is contributed by 13 to 20 (GPTASGKT). Substrate is bound at residue 15-20 (TASGKT). Interaction with substrate tRNA stretches follow at residues 38 to 41 (DSAL), 162 to 166 (QRLSR), 243 to 248 (RCVGYR), and 276 to 283 (KRQITWLR).

It belongs to the IPP transferase family. As to quaternary structure, monomer. It depends on Mg(2+) as a cofactor.

The enzyme catalyses adenosine(37) in tRNA + dimethylallyl diphosphate = N(6)-dimethylallyladenosine(37) in tRNA + diphosphate. In terms of biological role, catalyzes the transfer of a dimethylallyl group onto the adenine at position 37 in tRNAs that read codons beginning with uridine, leading to the formation of N6-(dimethylallyl)adenosine (i(6)A). This is tRNA dimethylallyltransferase from Vibrio campbellii (strain ATCC BAA-1116).